Consider the following 291-residue polypeptide: Oxidative stress-responsive serine-rich protein 1 (291 aa).

A disordered region spans residues 29–139 (ISLSVGEGPS…NAGENSTSLD (111 aa)). Basic residues predominate over residues 65-83 (STRKSSRGAVRTQRRRRSK). A compositionally biased stretch (polar residues) spans 95-105 (CSTTAPPSSSQ). T143 bears the Phosphothreonine mark.

In Mus musculus (Mouse), this protein is Oxidative stress-responsive serine-rich protein 1 (Oser1).